A 433-amino-acid polypeptide reads, in one-letter code: uncharacterized protein (433 aa).

Residues 36–58 (YYYYVQLAFKMLVGVLKNLPVVY) traverse the membrane as a helical segment. The interval 169 to 433 (VRVPSRDLQP…GEGRDLPEDN (265 aa)) is disordered. Acidic residues-rich tracts occupy residues 216-227 (GEPGENGDESDE) and 234-254 (GDEDAAQSEQNNDDGMDYESD). Basic and acidic residues-rich tracts occupy residues 265–280 (EPDRRHDAEAGERGSE), 354–364 (GGRRPARRDSP), and 422–433 (RRGEGRDLPEDN).

It localises to the host membrane. This is an uncharacterized protein from Psittacid herpesvirus 1 (isolate Amazon parrot/-/97-0001/1997) (PsHV-1).